The chain runs to 227 residues: Cytochrome c oxidase subunit 2 (227 aa).

Residues 1-14 (MAYPFQLGLQDATS) are Mitochondrial intermembrane-facing. The chain crosses the membrane as a helical span at residues 15-45 (PIMEELTNFHDHTLMIVFLISSLVLYIISLM). Topologically, residues 46-59 (LTTKLTHTSTMDAQ) are mitochondrial matrix. The chain crosses the membrane as a helical span at residues 60–87 (EVETIWTILPAVILILIALPSLRILYMM). Residues 88-227 (DEINNPALTV…HFENWSASMI (140 aa)) are Mitochondrial intermembrane-facing. Residues H161, C196, E198, C200, H204, and M207 each coordinate Cu cation. Residue E198 coordinates Mg(2+).

Belongs to the cytochrome c oxidase subunit 2 family. In terms of assembly, component of the cytochrome c oxidase (complex IV, CIV), a multisubunit enzyme composed of 14 subunits. The complex is composed of a catalytic core of 3 subunits MT-CO1, MT-CO2 and MT-CO3, encoded in the mitochondrial DNA, and 11 supernumerary subunits COX4I, COX5A, COX5B, COX6A, COX6B, COX6C, COX7A, COX7B, COX7C, COX8 and NDUFA4, which are encoded in the nuclear genome. The complex exists as a monomer or a dimer and forms supercomplexes (SCs) in the inner mitochondrial membrane with NADH-ubiquinone oxidoreductase (complex I, CI) and ubiquinol-cytochrome c oxidoreductase (cytochrome b-c1 complex, complex III, CIII), resulting in different assemblies (supercomplex SCI(1)III(2)IV(1) and megacomplex MCI(2)III(2)IV(2)). Found in a complex with TMEM177, COA6, COX18, COX20, SCO1 and SCO2. Interacts with TMEM177 in a COX20-dependent manner. Interacts with COX20. Interacts with COX16. The cofactor is Cu cation.

The protein localises to the mitochondrion inner membrane. It catalyses the reaction 4 Fe(II)-[cytochrome c] + O2 + 8 H(+)(in) = 4 Fe(III)-[cytochrome c] + 2 H2O + 4 H(+)(out). Functionally, component of the cytochrome c oxidase, the last enzyme in the mitochondrial electron transport chain which drives oxidative phosphorylation. The respiratory chain contains 3 multisubunit complexes succinate dehydrogenase (complex II, CII), ubiquinol-cytochrome c oxidoreductase (cytochrome b-c1 complex, complex III, CIII) and cytochrome c oxidase (complex IV, CIV), that cooperate to transfer electrons derived from NADH and succinate to molecular oxygen, creating an electrochemical gradient over the inner membrane that drives transmembrane transport and the ATP synthase. Cytochrome c oxidase is the component of the respiratory chain that catalyzes the reduction of oxygen to water. Electrons originating from reduced cytochrome c in the intermembrane space (IMS) are transferred via the dinuclear copper A center (CU(A)) of subunit 2 and heme A of subunit 1 to the active site in subunit 1, a binuclear center (BNC) formed by heme A3 and copper B (CU(B)). The BNC reduces molecular oxygen to 2 water molecules using 4 electrons from cytochrome c in the IMS and 4 protons from the mitochondrial matrix. This chain is Cytochrome c oxidase subunit 2 (MT-CO2), found in Berylmys bowersi (Bower's white-toothed rat).